We begin with the raw amino-acid sequence, 41 residues long: Trypsin inhibitor 2c (41 aa).

Intrachain disulfides connect Cys11–Cys32 and Cys15–Cys28.

Its function is as follows. Inhibits bovine trypsin with a Ki of 0.174 nM and trypsin-like proteases from G.mellonella larvae. Has no activity against serine proteases chymotrypsin, subtilisin and elastase. Has no activity against cysteine proteases from beetle gut. The sequence is that of Trypsin inhibitor 2c from Fagopyrum esculentum (Common buckwheat).